We begin with the raw amino-acid sequence, 89 residues long: Cell division protein FtsL (89 aa).

The Cytoplasmic segment spans residues 1–22 (MIDRKHYHLVGSIGKDILNNGK). A helical membrane pass occupies residues 23-40 (LPALLLIAVLASSSLVVI). The Periplasmic segment spans residues 41–89 (TTYQTRRLTVEREQLLLEQNILDIEWRNLILEDNVISDQSRFEFVATEQ).

This sequence belongs to the FtsL family. As to quaternary structure, part of a complex composed of FtsB, FtsL and FtsQ.

The protein resides in the cell inner membrane. Its function is as follows. Essential cell division protein. May link together the upstream cell division proteins, which are predominantly cytoplasmic, with the downstream cell division proteins, which are predominantly periplasmic. The chain is Cell division protein FtsL from Moranella endobia (strain PCIT).